A 75-amino-acid polypeptide reads, in one-letter code: Alpha-amylase inhibitor Paim-2 (75 aa).

Disulfide bonds link Cys10–Cys26 and Cys44–Cys72.

Its function is as follows. Inhibits mammalian alpha-amylases specifically but has no action on plant and microbial alpha-amylases. The polypeptide is Alpha-amylase inhibitor Paim-2 (Streptomyces olivaceoviridis (Streptomyces corchorusii)).